A 226-amino-acid chain; its full sequence is Phosphoribosylformylglycinamidine synthase subunit PurQ (226 aa).

One can recognise a Glutamine amidotransferase type-1 domain in the interval 2 to 225 (RFGIVVFPGS…MHYLEGGKNN (224 aa)). Cys86 serves as the catalytic Nucleophile. Active-site residues include His194 and Glu196.

In terms of assembly, part of the FGAM synthase complex composed of 1 PurL, 1 PurQ and 2 PurS subunits.

It is found in the cytoplasm. It carries out the reaction N(2)-formyl-N(1)-(5-phospho-beta-D-ribosyl)glycinamide + L-glutamine + ATP + H2O = 2-formamido-N(1)-(5-O-phospho-beta-D-ribosyl)acetamidine + L-glutamate + ADP + phosphate + H(+). The enzyme catalyses L-glutamine + H2O = L-glutamate + NH4(+). It functions in the pathway purine metabolism; IMP biosynthesis via de novo pathway; 5-amino-1-(5-phospho-D-ribosyl)imidazole from N(2)-formyl-N(1)-(5-phospho-D-ribosyl)glycinamide: step 1/2. Its function is as follows. Part of the phosphoribosylformylglycinamidine synthase complex involved in the purines biosynthetic pathway. Catalyzes the ATP-dependent conversion of formylglycinamide ribonucleotide (FGAR) and glutamine to yield formylglycinamidine ribonucleotide (FGAM) and glutamate. The FGAM synthase complex is composed of three subunits. PurQ produces an ammonia molecule by converting glutamine to glutamate. PurL transfers the ammonia molecule to FGAR to form FGAM in an ATP-dependent manner. PurS interacts with PurQ and PurL and is thought to assist in the transfer of the ammonia molecule from PurQ to PurL. The protein is Phosphoribosylformylglycinamidine synthase subunit PurQ of Alkaliphilus metalliredigens (strain QYMF).